Here is a 178-residue protein sequence, read N- to C-terminus: ATP-dependent protease subunit HslV (178 aa).

Thr7 is an active-site residue. 3 residues coordinate Na(+): Gly162, Cys165, and Thr168.

This sequence belongs to the peptidase T1B family. HslV subfamily. In terms of assembly, a double ring-shaped homohexamer of HslV is capped on each side by a ring-shaped HslU homohexamer. The assembly of the HslU/HslV complex is dependent on binding of ATP.

The protein localises to the cytoplasm. The catalysed reaction is ATP-dependent cleavage of peptide bonds with broad specificity.. With respect to regulation, allosterically activated by HslU binding. Its function is as follows. Protease subunit of a proteasome-like degradation complex believed to be a general protein degrading machinery. This chain is ATP-dependent protease subunit HslV, found in Burkholderia lata (strain ATCC 17760 / DSM 23089 / LMG 22485 / NCIMB 9086 / R18194 / 383).